A 125-amino-acid chain; its full sequence is Small ribosomal subunit protein bS16 (125 aa).

The interval 87 to 125 (EGKKKQALARQSASKKAVKEKTEESKGSEVDSETSTSAD) is disordered. A compositionally biased stretch (basic and acidic residues) spans 103-115 (AVKEKTEESKGSE).

The protein belongs to the bacterial ribosomal protein bS16 family.

The chain is Small ribosomal subunit protein bS16 from Prochlorococcus marinus (strain MIT 9211).